The primary structure comprises 158 residues: Small ribosomal subunit protein uS15 (158 aa).

The span at 1-10 (MARMHTRRRG) shows a compositional bias: basic residues. The interval 1–66 (MARMHTRRRG…EGVKGTPIPD (66 aa)) is disordered. Acidic residues predominate over residues 21–32 (DPPEWSDIDADA). Basic and acidic residues predominate over residues 33–45 (IEERVVELAEQGH).

This sequence belongs to the universal ribosomal protein uS15 family. As to quaternary structure, part of the 30S ribosomal subunit.

This is Small ribosomal subunit protein uS15 from Haloquadratum walsbyi (strain DSM 16790 / HBSQ001).